Reading from the N-terminus, the 358-residue chain is 3-dehydroquinate synthase (358 aa).

NAD(+) contacts are provided by residues 70–75 (DGEQYK), 104–108 (GVIGD), 128–129 (TT), Lys-141, Lys-150, and 168–171 (CLHT). Zn(2+) is bound by residues Glu-183, His-246, and His-263.

This sequence belongs to the sugar phosphate cyclases superfamily. Dehydroquinate synthase family. Co(2+) serves as cofactor. It depends on Zn(2+) as a cofactor. NAD(+) is required as a cofactor.

The protein resides in the cytoplasm. It catalyses the reaction 7-phospho-2-dehydro-3-deoxy-D-arabino-heptonate = 3-dehydroquinate + phosphate. It functions in the pathway metabolic intermediate biosynthesis; chorismate biosynthesis; chorismate from D-erythrose 4-phosphate and phosphoenolpyruvate: step 2/7. Catalyzes the conversion of 3-deoxy-D-arabino-heptulosonate 7-phosphate (DAHP) to dehydroquinate (DHQ). The protein is 3-dehydroquinate synthase of Shewanella loihica (strain ATCC BAA-1088 / PV-4).